An 861-amino-acid polypeptide reads, in one-letter code: Leucine--tRNA ligase (861 aa).

A 'HIGH' region motif is present at residues 42 to 52 (PYPSGRLHMGH). Residues 619–623 (KMSKS) carry the 'KMSKS' region motif. K622 provides a ligand contact to ATP.

It belongs to the class-I aminoacyl-tRNA synthetase family.

The protein resides in the cytoplasm. The catalysed reaction is tRNA(Leu) + L-leucine + ATP = L-leucyl-tRNA(Leu) + AMP + diphosphate. The protein is Leucine--tRNA ligase of Haemophilus influenzae (strain PittGG).